The sequence spans 262 residues: Nitrilase (262 aa).

One can recognise a CN hydrolase domain in the interval 2–237; it reads VKVAYVQMNP…EEVGVAEIDL (236 aa). Residue E42 is the Proton acceptor of the active site. K113 (proton donor) is an active-site residue. The active-site Nucleophile is the C146. Residue 173 to 174 participates in substrate binding; it reads VM.

The protein belongs to the carbon-nitrogen hydrolase superfamily. Homodimer.

It catalyses the reaction a nitrile + 2 H2O = a carboxylate + NH4(+). With respect to regulation, enzymatic activity is inhibited in the presence of acetone, methanol and metal ions such as Ag(2+) and Hg(2+). Is also inhibited by various thiol reagents such as DTNB, p-chloromercuribenzoate, p-hydroxymercuribenzoate, iodacetamide and iodacetate. EDTA has no influence on activity. Nitrilase that hydrolyzes preferentially aliphatic nitriles like malononitrile and fumaronitrile in vitro. These dinitriles are converted to the corresponding monoacid mononitriles, showing the enzyme is regioselective. Cannot hydrolyze compounds with a nitrile group bound to an aromatic ring or amino acid. Its biological role is unknown. This chain is Nitrilase, found in Pyrococcus abyssi (strain GE5 / Orsay).